Consider the following 330-residue polypeptide: tRNA (guanine(37)-N(1))-methyltransferase Trm5b (330 aa).

S-adenosyl-L-methionine-binding positions include arginine 173, 211–212 (DI), 238–239 (DS), and asparagine 252.

The protein belongs to the class I-like SAM-binding methyltransferase superfamily. TRM5/TYW2 family.

Its subcellular location is the cytoplasm. The catalysed reaction is guanosine(37) in tRNA + S-adenosyl-L-methionine = N(1)-methylguanosine(37) in tRNA + S-adenosyl-L-homocysteine + H(+). Specifically methylates the N1 position of guanosine-37 in various tRNAs. The sequence is that of tRNA (guanine(37)-N(1))-methyltransferase Trm5b from Pyrococcus abyssi (strain GE5 / Orsay).